The primary structure comprises 99 residues: DNA-directed RNA polymerase subunit Rpo11 (99 aa).

This sequence belongs to the archaeal Rpo11/eukaryotic RPB11/RPC19 RNA polymerase subunit family. In terms of assembly, part of the RNA polymerase complex. Forms an Rpo3-Rpo10-Rpo11-Rpo12 complex upon coexpression.

It is found in the cytoplasm. It catalyses the reaction RNA(n) + a ribonucleoside 5'-triphosphate = RNA(n+1) + diphosphate. In terms of biological role, DNA-dependent RNA polymerase (RNAP) catalyzes the transcription of DNA into RNA using the four ribonucleoside triphosphates as substrates. In Methanocaldococcus jannaschii (strain ATCC 43067 / DSM 2661 / JAL-1 / JCM 10045 / NBRC 100440) (Methanococcus jannaschii), this protein is DNA-directed RNA polymerase subunit Rpo11.